Consider the following 167-residue polypeptide: Telethonin (167 aa).

At Ser39 the chain carries Phosphoserine. A disordered region spans residues 144-167; it reads VPVSKPGALRRSLSRSMSQEAQRG. The span at 157–167 shows a compositional bias: polar residues; sequence SRSMSQEAQRG.

As to quaternary structure, interacts with MYOZ1, MYOZ2 and MYOZ3. Interacts with CSRP3. Interacts directly with the N-terminal Ig-like domains of 2 titin (TTN) molecules. Interacts with ANKRD2; the interaction is direct. Heart and skeletal muscle.

Its subcellular location is the cytoplasm. It is found in the myofibril. The protein localises to the sarcomere. In terms of biological role, muscle assembly regulating factor. Mediates the antiparallel assembly of titin (TTN) molecules at the sarcomeric Z-disk. The sequence is that of Telethonin (TCAP) from Homo sapiens (Human).